A 401-amino-acid chain; its full sequence is S-adenosylmethionine synthase (401 aa).

Histidine 16 contacts ATP. Aspartate 18 is a binding site for Mg(2+). Glutamate 44 contacts K(+). L-methionine is bound by residues glutamate 57 and glutamine 100. The interval 100–110 (QSPDIAQGVNE) is flexible loop. ATP is bound by residues 174-176 (DAK), 241-242 (RF), aspartate 250, 256-257 (RK), alanine 273, and lysine 277. L-methionine is bound at residue aspartate 250. Lysine 281 is a binding site for L-methionine.

The protein belongs to the AdoMet synthase family. Homotetramer; dimer of dimers. Mg(2+) serves as cofactor. The cofactor is K(+).

Its subcellular location is the cytoplasm. It carries out the reaction L-methionine + ATP + H2O = S-adenosyl-L-methionine + phosphate + diphosphate. It functions in the pathway amino-acid biosynthesis; S-adenosyl-L-methionine biosynthesis; S-adenosyl-L-methionine from L-methionine: step 1/1. In terms of biological role, catalyzes the formation of S-adenosylmethionine (AdoMet) from methionine and ATP. The overall synthetic reaction is composed of two sequential steps, AdoMet formation and the subsequent tripolyphosphate hydrolysis which occurs prior to release of AdoMet from the enzyme. The sequence is that of S-adenosylmethionine synthase from Streptococcus equi subsp. zooepidemicus (strain MGCS10565).